Here is a 1084-residue protein sequence, read N- to C-terminus: Probable hemoglobin and hemoglobin-haptoglobin-binding protein 3 (1084 aa).

A signal peptide spans 1 to 24 (MTNFKFSLLACSIAFALNASTVYA). 12 repeat units span residues 26–29 (QPTN), 30–33 (QPTN), 34–37 (QPTN), 38–41 (QPTN), 42–45 (QPTN), 46–49 (QPTN), 50–53 (QPTN), 54–57 (QPTN), 58–61 (QPTN), 62–65 (QPTN), 66–69 (QPTN), and 70–73 (QPTN). The interval 26 to 73 (QPTNQPTNQPTNQPTNQPTNQPTNQPTNQPTNQPTNQPTNQPTNQPTN) is 12 X 4 AA tandem repeats of Q-P-T-N. Low complexity predominate over residues 26-75 (QPTNQPTNQPTNQPTNQPTNQPTNQPTNQPTNQPTNQPTNQPTNQPTNQN). The tract at residues 26–77 (QPTNQPTNQPTNQPTNQPTNQPTNQPTNQPTNQPTNQPTNQPTNQPTNQNSN) is disordered. The short motif at 83-90 (EQINVSGS) is the TonB box element. The region spanning 95 to 220 (NIKEKKVGET…LGGSVIFETK (126 aa)) is the TBDR plug domain. Residues 228-1084 (DKDYYLSYKR…NYRMSVQFEF (857 aa)) enclose the TBDR beta-barrel domain. The short motif at 1067–1084 (NRFYAPGRNYRMSVQFEF) is the TonB C-terminal box element.

Belongs to the TonB-dependent receptor family. Hemoglobin/haptoglobin binding protein subfamily.

It is found in the cell outer membrane. Functionally, acts as a receptor for hemoglobin or the hemoglobin/haptoglobin complex of the human host and is required for heme uptake. The sequence is that of Probable hemoglobin and hemoglobin-haptoglobin-binding protein 3 from Haemophilus influenzae (strain ATCC 51907 / DSM 11121 / KW20 / Rd).